The following is a 492-amino-acid chain: N-succinylglutamate 5-semialdehyde dehydrogenase (492 aa).

225 to 230 contributes to the NAD(+) binding site; that stretch reads GSSNTG. Active-site residues include E248 and C282.

It belongs to the aldehyde dehydrogenase family. AstD subfamily.

The catalysed reaction is N-succinyl-L-glutamate 5-semialdehyde + NAD(+) + H2O = N-succinyl-L-glutamate + NADH + 2 H(+). Its pathway is amino-acid degradation; L-arginine degradation via AST pathway; L-glutamate and succinate from L-arginine: step 4/5. Catalyzes the NAD-dependent reduction of succinylglutamate semialdehyde into succinylglutamate. The polypeptide is N-succinylglutamate 5-semialdehyde dehydrogenase (Colwellia psychrerythraea (strain 34H / ATCC BAA-681) (Vibrio psychroerythus)).